Reading from the N-terminus, the 392-residue chain is Succinate--CoA ligase [ADP-forming] subunit beta (392 aa).

Residues 9-248 enclose the ATP-grasp domain; the sequence is KGLFRDYGVS…LHEEDPTEVK (240 aa). ATP is bound by residues lysine 50, 57-59, valine 106, and glutamate 111; that span reads GRG. Mg(2+) is bound by residues asparagine 203 and aspartate 217. Residues asparagine 268 and 325–327 contribute to the substrate site; that span reads GIV.

This sequence belongs to the succinate/malate CoA ligase beta subunit family. In terms of assembly, heterotetramer of two alpha and two beta subunits. Requires Mg(2+) as cofactor.

It carries out the reaction succinate + ATP + CoA = succinyl-CoA + ADP + phosphate. The enzyme catalyses GTP + succinate + CoA = succinyl-CoA + GDP + phosphate. The protein operates within carbohydrate metabolism; tricarboxylic acid cycle; succinate from succinyl-CoA (ligase route): step 1/1. Its function is as follows. Succinyl-CoA synthetase functions in the citric acid cycle (TCA), coupling the hydrolysis of succinyl-CoA to the synthesis of either ATP or GTP and thus represents the only step of substrate-level phosphorylation in the TCA. The beta subunit provides nucleotide specificity of the enzyme and binds the substrate succinate, while the binding sites for coenzyme A and phosphate are found in the alpha subunit. The protein is Succinate--CoA ligase [ADP-forming] subunit beta of Salinibacter ruber (strain DSM 13855 / M31).